The chain runs to 213 residues: Kynurenine formamidase (213 aa).

Trp-18 contacts substrate. Residues His-48, His-52, and Asp-54 each contribute to the Zn(2+) site. His-58 functions as the Proton donor/acceptor in the catalytic mechanism. Zn(2+)-binding residues include His-160 and Glu-172.

This sequence belongs to the Cyclase 1 superfamily. KynB family. Homodimer. It depends on Zn(2+) as a cofactor.

The enzyme catalyses N-formyl-L-kynurenine + H2O = L-kynurenine + formate + H(+). It participates in amino-acid degradation; L-tryptophan degradation via kynurenine pathway; L-kynurenine from L-tryptophan: step 2/2. Its function is as follows. Catalyzes the hydrolysis of N-formyl-L-kynurenine to L-kynurenine, the second step in the kynurenine pathway of tryptophan degradation. This Burkholderia cenocepacia (strain HI2424) protein is Kynurenine formamidase.